The primary structure comprises 543 residues: Chaperonin GroEL 2 (543 aa).

ATP is bound by residues 29–32 (TLGP), 86–90 (DGTTT), Gly-413, 479–481 (NAA), and Asp-495.

The protein belongs to the chaperonin (HSP60) family. Forms a cylinder of 14 subunits composed of two heptameric rings stacked back-to-back. Interacts with the co-chaperonin GroES.

It is found in the cytoplasm. The enzyme catalyses ATP + H2O + a folded polypeptide = ADP + phosphate + an unfolded polypeptide.. In terms of biological role, together with its co-chaperonin GroES, plays an essential role in assisting protein folding. The GroEL-GroES system forms a nano-cage that allows encapsulation of the non-native substrate proteins and provides a physical environment optimized to promote and accelerate protein folding. The polypeptide is Chaperonin GroEL 2 (Synechococcus sp. (strain CC9311)).